A 161-amino-acid polypeptide reads, in one-letter code: Phage-like element PBSX protein XkdI (161 aa).

The protein to B.subtilis YqbI.

This is Phage-like element PBSX protein XkdI (xkdI) from Bacillus subtilis (strain 168).